Consider the following 230-residue polypeptide: 2-C-methyl-D-erythritol 4-phosphate cytidylyltransferase (230 aa).

This sequence belongs to the IspD/TarI cytidylyltransferase family. IspD subfamily.

The enzyme catalyses 2-C-methyl-D-erythritol 4-phosphate + CTP + H(+) = 4-CDP-2-C-methyl-D-erythritol + diphosphate. It participates in isoprenoid biosynthesis; isopentenyl diphosphate biosynthesis via DXP pathway; isopentenyl diphosphate from 1-deoxy-D-xylulose 5-phosphate: step 2/6. In terms of biological role, catalyzes the formation of 4-diphosphocytidyl-2-C-methyl-D-erythritol from CTP and 2-C-methyl-D-erythritol 4-phosphate (MEP). This Shewanella halifaxensis (strain HAW-EB4) protein is 2-C-methyl-D-erythritol 4-phosphate cytidylyltransferase.